The primary structure comprises 435 residues: Exodeoxyribonuclease 7 large subunit (435 aa).

The span at 1–10 shows a compositional bias: polar residues; sequence MRGTRVTETA. Disordered regions lie at residues 1 to 21 and 413 to 435; these read MRGT…GPPT and AGKA…PRGK.

It belongs to the XseA family. In terms of assembly, heterooligomer composed of large and small subunits.

It is found in the cytoplasm. It catalyses the reaction Exonucleolytic cleavage in either 5'- to 3'- or 3'- to 5'-direction to yield nucleoside 5'-phosphates.. In terms of biological role, bidirectionally degrades single-stranded DNA into large acid-insoluble oligonucleotides, which are then degraded further into small acid-soluble oligonucleotides. In Leifsonia xyli subsp. xyli (strain CTCB07), this protein is Exodeoxyribonuclease 7 large subunit.